Reading from the N-terminus, the 274-residue chain is Probable WRKY transcription factor 49 (274 aa).

Residues 108–173 constitute a DNA-binding region (WRKY); it reads NSNGMCDDGY…YEGFHFHYTY (66 aa). The tract at residues 188–228 is disordered; it reads KTKIHKHNAQDMNKKSQTQEESKEAQLGELTNQNHPVNKAQ. Residues 193 to 222 adopt a coiled-coil conformation; sequence KHNAQDMNKKSQTQEESKEAQLGELTNQNH. Positions 195-213 are enriched in basic and acidic residues; the sequence is NAQDMNKKSQTQEESKEAQ. The segment covering 216–228 has biased composition (polar residues); it reads ELTNQNHPVNKAQ.

This sequence belongs to the WRKY group II-c family.

The protein resides in the nucleus. Its function is as follows. Transcription factor. Interacts specifically with the W box (5'-(T)TGAC[CT]-3'), a frequently occurring elicitor-responsive cis-acting element. The protein is Probable WRKY transcription factor 49 (WRKY49) of Arabidopsis thaliana (Mouse-ear cress).